The following is a 221-amino-acid chain: Deoxyribose-phosphate aldolase (221 aa).

The Proton donor/acceptor role is filled by aspartate 96. The active-site Schiff-base intermediate with acetaldehyde is lysine 157. The Proton donor/acceptor role is filled by lysine 185.

Belongs to the DeoC/FbaB aldolase family. DeoC type 1 subfamily.

The protein localises to the cytoplasm. The catalysed reaction is 2-deoxy-D-ribose 5-phosphate = D-glyceraldehyde 3-phosphate + acetaldehyde. It functions in the pathway carbohydrate degradation; 2-deoxy-D-ribose 1-phosphate degradation; D-glyceraldehyde 3-phosphate and acetaldehyde from 2-deoxy-alpha-D-ribose 1-phosphate: step 2/2. Catalyzes a reversible aldol reaction between acetaldehyde and D-glyceraldehyde 3-phosphate to generate 2-deoxy-D-ribose 5-phosphate. The protein is Deoxyribose-phosphate aldolase of Crocosphaera subtropica (strain ATCC 51142 / BH68) (Cyanothece sp. (strain ATCC 51142)).